A 143-amino-acid polypeptide reads, in one-letter code: MFDFDATLPFMALQFLLLAAVLNAIFYKPLTKVLDDRDSYIRTNTLEARESLAKAERLATEYEQQLADARRQSQATVEAAQLEAKKITAEKIAEAQKEAQSQREQASVEIEQQKQQAFSTLEQQVDALSRQILEKLLGPTPVR.

Residues 6-26 form a helical membrane-spanning segment; the sequence is ATLPFMALQFLLLAAVLNAIF.

This sequence belongs to the ATPase B chain family. In terms of assembly, F-type ATPases have 2 components, F(1) - the catalytic core - and F(0) - the membrane proton channel. F(1) has five subunits: alpha(3), beta(3), gamma(1), delta(1), epsilon(1). F(0) has four main subunits: a(1), b(1), b'(1) and c(10-14). The alpha and beta chains form an alternating ring which encloses part of the gamma chain. F(1) is attached to F(0) by a central stalk formed by the gamma and epsilon chains, while a peripheral stalk is formed by the delta, b and b' chains.

It is found in the cellular thylakoid membrane. F(1)F(0) ATP synthase produces ATP from ADP in the presence of a proton or sodium gradient. F-type ATPases consist of two structural domains, F(1) containing the extramembraneous catalytic core and F(0) containing the membrane proton channel, linked together by a central stalk and a peripheral stalk. During catalysis, ATP synthesis in the catalytic domain of F(1) is coupled via a rotary mechanism of the central stalk subunits to proton translocation. In terms of biological role, component of the F(0) channel, it forms part of the peripheral stalk, linking F(1) to F(0). The b'-subunit is a diverged and duplicated form of b found in plants and photosynthetic bacteria. The chain is ATP synthase subunit b' from Nostoc punctiforme (strain ATCC 29133 / PCC 73102).